A 333-amino-acid polypeptide reads, in one-letter code: Mitochondrial 2-oxoglutarate/malate carrier protein (333 aa).

3 Solcar repeats span residues 29–127, 136–227, and 236–325; these read FRLI…LFER, PGFL…SKQF, and DNIL…MNKA. 6 helical membrane-spanning segments follow: residues 30–61, 102–120, 138–159, 202–221, 241–259, and 300–319; these read RLIA…VQPL, GLSA…RLGI, FLLK…GTPA, GCIP…LASY, HFCA…SMPV, and GFTP…FIFL.

This sequence belongs to the mitochondrial carrier (TC 2.A.29) family. Interacts with SMIM26.

It is found in the membrane. The catalysed reaction is (S)-malate(in) + 2-oxoglutarate(out) = (S)-malate(out) + 2-oxoglutarate(in). It catalyses the reaction malonate(in) + 2-oxoglutarate(out) = malonate(out) + 2-oxoglutarate(in). The enzyme catalyses succinate(in) + 2-oxoglutarate(out) = succinate(out) + 2-oxoglutarate(in). It carries out the reaction maleate(in) + 2-oxoglutarate(out) = maleate(out) + 2-oxoglutarate(in). The catalysed reaction is oxaloacetate(in) + 2-oxoglutarate(out) = oxaloacetate(out) + 2-oxoglutarate(in). In terms of biological role, catalyzes the transport of 2-oxoglutarate (alpha-oxoglutarate) across the inner mitochondrial membrane in an electroneutral exchange for malate. Can also exchange 2-oxoglutarate for other dicarboxylic acids such as malonate, succinate, maleate and oxaloacetate, although with lower affinity. Contributes to several metabolic processes, including the malate-aspartate shuttle, the oxoglutarate/isocitrate shuttle, in gluconeogenesis from lactate, and in nitrogen metabolism. Maintains mitochondrial fusion and fission events, and the organization and morphology of cristae. Involved in the regulation of apoptosis. Helps protect from cytotoxic-induced apoptosis by modulating glutathione levels in mitochondria. The chain is Mitochondrial 2-oxoglutarate/malate carrier protein (SLC25A11) from Sus scrofa (Pig).